The following is a 179-amino-acid chain: Large ribosomal subunit protein uL10 (179 aa).

This sequence belongs to the universal ribosomal protein uL10 family. Part of the ribosomal stalk of the 50S ribosomal subunit. The N-terminus interacts with L11 and the large rRNA to form the base of the stalk. The C-terminus forms an elongated spine to which L12 dimers bind in a sequential fashion forming a multimeric L10(L12)X complex.

In terms of biological role, forms part of the ribosomal stalk, playing a central role in the interaction of the ribosome with GTP-bound translation factors. This Thermomicrobium roseum (strain ATCC 27502 / DSM 5159 / P-2) protein is Large ribosomal subunit protein uL10.